The sequence spans 184 residues: Sec-independent protein translocase protein TatB (184 aa).

The helical transmembrane segment at 1–21 (MFDIGFSELVLLFVVGLIVLG) threads the bilayer. Residues 149–168 (AEEGEPMLEMGESDFSEDEQ) show a composition bias toward acidic residues. The segment at 149-184 (AEEGEPMLEMGESDFSEDEQATASSNETIENIKEKV) is disordered.

Belongs to the TatB family. As to quaternary structure, the Tat system comprises two distinct complexes: a TatABC complex, containing multiple copies of TatA, TatB and TatC subunits, and a separate TatA complex, containing only TatA subunits. Substrates initially bind to the TatABC complex, which probably triggers association of the separate TatA complex to form the active translocon.

It is found in the cell inner membrane. Its function is as follows. Part of the twin-arginine translocation (Tat) system that transports large folded proteins containing a characteristic twin-arginine motif in their signal peptide across membranes. Together with TatC, TatB is part of a receptor directly interacting with Tat signal peptides. TatB may form an oligomeric binding site that transiently accommodates folded Tat precursor proteins before their translocation. The polypeptide is Sec-independent protein translocase protein TatB (Histophilus somni (strain 129Pt) (Haemophilus somnus)).